Reading from the N-terminus, the 190-residue chain is Holliday junction branch migration complex subunit RuvA (190 aa).

The tract at residues 1–64 (MIGRITGTLI…EDAQLLYGFG (64 aa)) is domain I. The tract at residues 65 to 137 (SSAERSTFRE…MRGKLGADIG (73 aa)) is domain II. The tract at residues 137–141 (GATPH) is flexible linker. The domain III stretch occupies residues 142–190 (AASGHQSDILNALLALGYSDKESQAALKKLPDGVDVSEGIRLALKALVR).

Belongs to the RuvA family. In terms of assembly, homotetramer. Forms an RuvA(8)-RuvB(12)-Holliday junction (HJ) complex. HJ DNA is sandwiched between 2 RuvA tetramers; dsDNA enters through RuvA and exits via RuvB. An RuvB hexamer assembles on each DNA strand where it exits the tetramer. Each RuvB hexamer is contacted by two RuvA subunits (via domain III) on 2 adjacent RuvB subunits; this complex drives branch migration. In the full resolvosome a probable DNA-RuvA(4)-RuvB(12)-RuvC(2) complex forms which resolves the HJ.

It is found in the cytoplasm. Functionally, the RuvA-RuvB-RuvC complex processes Holliday junction (HJ) DNA during genetic recombination and DNA repair, while the RuvA-RuvB complex plays an important role in the rescue of blocked DNA replication forks via replication fork reversal (RFR). RuvA specifically binds to HJ cruciform DNA, conferring on it an open structure. The RuvB hexamer acts as an ATP-dependent pump, pulling dsDNA into and through the RuvAB complex. HJ branch migration allows RuvC to scan DNA until it finds its consensus sequence, where it cleaves and resolves the cruciform DNA. This is Holliday junction branch migration complex subunit RuvA from Bordetella pertussis (strain Tohama I / ATCC BAA-589 / NCTC 13251).